Here is a 252-residue protein sequence, read N- to C-terminus: uncharacterized protein (252 aa).

This is an uncharacterized protein from Rickettsia prowazekii (strain Madrid E).